Consider the following 748-residue polypeptide: 5-methyltetrahydropteroyltriglutamate--homocysteine methyltransferase (748 aa).

Residues 18–21 (REWK) and K112 each bind 5-methyltetrahydropteroyltri-L-glutamate. Residues 420–422 (IGS) and E473 each bind L-homocysteine. Residues 420-422 (IGS) and E473 contribute to the L-methionine site. W550 is a 5-methyltetrahydropteroyltri-L-glutamate binding site. D588 is an L-homocysteine binding site. Position 588 (D588) interacts with L-methionine. 5-methyltetrahydropteroyltri-L-glutamate is bound at residue E594. Zn(2+) is bound by residues H630, C632, and E654. The active-site Proton donor is H683. Residue C715 coordinates Zn(2+).

It belongs to the vitamin-B12 independent methionine synthase family. It depends on Zn(2+) as a cofactor.

It carries out the reaction 5-methyltetrahydropteroyltri-L-glutamate + L-homocysteine = tetrahydropteroyltri-L-glutamate + L-methionine. The protein operates within amino-acid biosynthesis; L-methionine biosynthesis via de novo pathway; L-methionine from L-homocysteine (MetE route): step 1/1. Catalyzes the transfer of a methyl group from 5-methyltetrahydrofolate to homocysteine resulting in methionine formation. This Staphylococcus epidermidis (strain ATCC 35984 / DSM 28319 / BCRC 17069 / CCUG 31568 / BM 3577 / RP62A) protein is 5-methyltetrahydropteroyltriglutamate--homocysteine methyltransferase.